The primary structure comprises 180 residues: MARLKDRYRQEVAPALKERFGIDNPMRVPTLEKIVVNMGVGEAAQDSRKLDGAMEDLARITGQKPQVRRARKSIAGFKIREGMPVGARVTLRGERMWEFLDRLISVALPRVRDFRGVSPDSFDGRGNYALGVREQLIFPEISYDAVDSVRGLDIAIVTTAETDEEARELLRLLGMPFRPN.

The protein belongs to the universal ribosomal protein uL5 family. In terms of assembly, part of the 50S ribosomal subunit; part of the 5S rRNA/L5/L18/L25 subcomplex. Contacts the 5S rRNA and the P site tRNA. Forms a bridge to the 30S subunit in the 70S ribosome.

This is one of the proteins that bind and probably mediate the attachment of the 5S RNA into the large ribosomal subunit, where it forms part of the central protuberance. In the 70S ribosome it contacts protein S13 of the 30S subunit (bridge B1b), connecting the 2 subunits; this bridge is implicated in subunit movement. Contacts the P site tRNA; the 5S rRNA and some of its associated proteins might help stabilize positioning of ribosome-bound tRNAs. The sequence is that of Large ribosomal subunit protein uL5 from Rubrobacter xylanophilus (strain DSM 9941 / JCM 11954 / NBRC 16129 / PRD-1).